The following is a 201-amino-acid chain: Large ribosomal subunit protein uL4 (201 aa).

The segment at 43–71 (TRAQKTRSEVSGGGKKPWAQKGTGRARAG) is disordered.

It belongs to the universal ribosomal protein uL4 family. In terms of assembly, part of the 50S ribosomal subunit.

Its function is as follows. One of the primary rRNA binding proteins, this protein initially binds near the 5'-end of the 23S rRNA. It is important during the early stages of 50S assembly. It makes multiple contacts with different domains of the 23S rRNA in the assembled 50S subunit and ribosome. Forms part of the polypeptide exit tunnel. The chain is Large ribosomal subunit protein uL4 from Pseudoalteromonas translucida (strain TAC 125).